Here is a 634-residue protein sequence, read N- to C-terminus: MSDAATRAEETSEGHSSSAIGLMVGAVGVCYGDIGTSPLYTLKEVFIGGYGVQANHDGVLGVLSLIFWSLVWVVSIKYVIFVLRADNQGEGGVMALSALARRAAAPFGRLQTFVVVAGLIGAALFYGDSMITPAISVLSAVEGLEIAFDGLEHWTVPLALIVLIGLFLIQKHGTARIGILFGPVMVLWFGALAALGVYGVIQQPEVLQAMNPVWAVRFFSSHPGIGVAILGATVLALTGAEALYADMGHFGRKPIARAWFLLVLPALVLNYFGQGATILSNAEAARNPFYLLAPGWALLPMVALSTLATVIASQAVISGAFSLTRQAIQLGYVPRMTIQHTSSHEQGQIYIGGVNWALMVGVVLLVLGFESSASLAAAYGVAVTGTMLITTLLMGVVIWRLWKWPLWLGVPFFCVMLAVDSLFFAANLPKVIQGGAFPVIAGIVIFILMSTWKRGRQLLVERLDEGSLPLSVFISSMRVQPPHRVQGTAVFLTARTDAVPHALLHNLLHNQVLHEQVVLLTVVNEDSPRVSPDRRFEVEAYGDGFFRVILHFGFMEEPDIPAALRLCHLNELDFSPMRTTYFLSRETVIPSKRIGMARWREGLFAFLLKNANGNLRYFNLPLNRVIELGTQVEI.

The next 12 helical transmembrane spans lie at Ala19–Leu39, Val62–Val82, Phe113–Pro133, Gly150–Gln170, Ile177–Val197, Ile225–Ala245, Trp259–Leu279, Leu291–Ile311, Ile349–Phe369, Tyr379–Trp399, Leu406–Ala426, and Val431–Thr451.

It belongs to the HAK/KUP transporter (TC 2.A.72) family.

The protein localises to the cell inner membrane. The enzyme catalyses K(+)(in) + H(+)(in) = K(+)(out) + H(+)(out). Its function is as follows. Transport of potassium into the cell. Likely operates as a K(+):H(+) symporter. In Pseudomonas aeruginosa (strain LESB58), this protein is Probable potassium transport system protein Kup.